The primary structure comprises 1042 residues: Sarcoplasmic/endoplasmic reticulum calcium ATPase 2 (1042 aa).

The Cytoplasmic segment spans residues Met-1–Thr-48. Ser-38 bears the Phosphoserine mark. A helical membrane pass occupies residues Leu-49–Ala-69. At Cys-70–Val-89 the chain is on the lumenal side. A helical membrane pass occupies residues Glu-90–Arg-110. The Cytoplasmic segment spans residues Asn-111–Leu-253. The chain crosses the membrane as a helical span at residues Asp-254–Ile-273. The Lumenal portion of the chain corresponds to Ile-274–Tyr-295. A 3'-nitrotyrosine mark is found at Tyr-294 and Tyr-295. The chain crosses the membrane as a helical span at residues Phe-296–Ala-313. The Ca(2+) site is built by Val-304, Ala-305, Ile-307, and Glu-309. The Cytoplasmic segment spans residues Val-314 to Met-756. The active-site 4-aspartylphosphate intermediate is Asp-351. The Mg(2+) site is built by Asp-351 and Thr-353. Thr-353 provides a ligand contact to ATP. Thr-441 is modified (phosphothreonine). ATP is bound by residues Glu-442, Arg-489, and Lys-514. Ser-531 is modified (phosphoserine). Arg-559 is an ATP binding site. Residues Met-575–Gly-594 are interaction with HAX1. Ser-580 is subject to Phosphoserine. Residues Thr-624, Gly-625, and Asp-626 each coordinate ATP. Position 663 is a phosphoserine (Ser-663). The ATP site is built by Arg-677 and Lys-683. Residue Asp-702 coordinates Mg(2+). Asn-705 is a binding site for ATP. A helical membrane pass occupies residues Lys-757–Leu-776. 2 residues coordinate Ca(2+): Asn-767 and Glu-770. At Thr-777–Leu-786 the chain is on the lumenal side. A helical transmembrane segment spans residues Ile-787–Gly-807. The interaction with PLN stretch occupies residues Ile-787–Gly-807. Residues Pro-788–Ser-1042 are interaction with TMEM64 and PDIA3. The Ca(2+) site is built by Asn-795, Thr-798, and Asp-799. Residues Phe-808–Leu-827 lie on the Cytoplasmic side of the membrane. The chain crosses the membrane as a helical span at residues Ile-828–Ala-850. At Ala-851–Met-896 the chain is on the lumenal side. The cysteines at positions 875 and 887 are disulfide-linked. A helical transmembrane segment spans residues Thr-897–Ser-916. Position 907 (Glu-907) interacts with Ca(2+). The Cytoplasmic portion of the chain corresponds to Glu-917–Asn-929. Residues Ile-930–Tyr-948 form a helical membrane-spanning segment. Residues Trp-931 to Leu-942 are interaction with PLN. The Lumenal segment spans residues Val-949–Leu-963. A helical membrane pass occupies residues Thr-964–Lys-984. Residues Phe-985–Ser-1042 are Cytoplasmic-facing.

The protein belongs to the cation transport ATPase (P-type) (TC 3.A.3) family. Type IIA subfamily. In terms of assembly, interacts with sarcolipin (SLN); the interaction inhibits ATP2A2 Ca(2+) affinity. Interacts with phospholamban (PLN); the interaction inhibits ATP2A2 Ca(2+) affinity. Interacts with myoregulin (MRLN). Interacts with ARLN and ERLN; the interactions inhibit ATP2A2 Ca(2+) affinity. Interacts with STRIT1/DWORF; the interaction results in activation of ATP2A2. Interacts with the monomeric forms of SLN, PLN, ARLN, ERLN and STRI1/DWORF. Interacts with HAX1. Interacts with S100A8 and S100A9. Interacts with SLC35G1 and STIM1. Interacts with TMEM203. Interacts with TMEM64 and PDIA3. Interacts with TMX1. Interacts with TMX2. Interacts with VMP1; VMP1 competes with PLN and SLN to prevent them from forming an inhibitory complex with ATP2A2. Interacts with ULK1. Interacts with S100A1 in a Ca(2+)-dependent manner. Interacts with TUNAR. Interacts with FLVCR2; this interaction occurs in the absence of heme and promotes ATP2A2 proteasomal degradation; this complex is dissociated upon heme binding. Interacts with FNIP1. As to quaternary structure, interacts with TRAM2 (via C-terminus). Mg(2+) is required as a cofactor. Nitrated under oxidative stress. Nitration on the two tyrosine residues inhibits catalytic activity. Post-translationally, serotonylated on Gln residues by TGM2 in response to hypoxia, leading to its inactivation. As to expression, detected in heart left ventricle (at protein level). Isoform 2 is highly expressed in heart and slow twitch skeletal muscle. Isoform 1 is widely expressed.

Its subcellular location is the endoplasmic reticulum membrane. It localises to the sarcoplasmic reticulum membrane. The enzyme catalyses Ca(2+)(in) + ATP + H2O = Ca(2+)(out) + ADP + phosphate + H(+). With respect to regulation, has different conformational states with differential Ca2+ affinity. The E1 conformational state (active form) shows high Ca(2+) affinity, while the E2 state exhibits low Ca(2+) affinity. Binding of ATP allosterically increases its affinity for subsequent binding of Ca2+. Reversibly inhibited by phospholamban (PLN) at low calcium concentrations. PLN inhibits ATP2A2 Ca(2+) affinity by disrupting its allosteric activation by ATP. Inhibited by sarcolipin (SLN) and myoregulin (MRLN). The inhibition is blocked by VMP1. Enhanced by STRIT1/DWORF; STRIT1 increases activity by displacing sarcolipin (SLN), phospholamban (PLN) and myoregulin (MRLN). Stabilizes SERCA2 in its E2 state. Functionally, this magnesium-dependent enzyme catalyzes the hydrolysis of ATP coupled with the translocation of calcium from the cytosol to the sarcoplasmic reticulum lumen. Involved in autophagy in response to starvation. Upon interaction with VMP1 and activation, controls ER-isolation membrane contacts for autophagosome formation. Also modulates ER contacts with lipid droplets, mitochondria and endosomes. In coordination with FLVCR2 mediates heme-stimulated switching from mitochondrial ATP synthesis to thermogenesis. Involved in the regulation of the contraction/relaxation cycle. Acts as a regulator of TNFSF11-mediated Ca(2+) signaling pathways via its interaction with TMEM64 which is critical for the TNFSF11-induced CREB1 activation and mitochondrial ROS generation necessary for proper osteoclast generation. Association between TMEM64 and SERCA2 in the ER leads to cytosolic Ca(2+) spiking for activation of NFATC1 and production of mitochondrial ROS, thereby triggering Ca(2+) signaling cascades that promote osteoclast differentiation and activation. In Sus scrofa (Pig), this protein is Sarcoplasmic/endoplasmic reticulum calcium ATPase 2 (ATP2A2).